Consider the following 206-residue polypeptide: dITP/XTP pyrophosphatase (206 aa).

Serine 10–lysine 15 serves as a coordination point for substrate. Glutamate 40 and aspartate 69 together coordinate Mg(2+). Residue aspartate 69 is the Proton acceptor of the active site. Residues serine 70, phenylalanine 148 to aspartate 151, lysine 171, and histidine 176 to arginine 177 each bind substrate.

It belongs to the HAM1 NTPase family. In terms of assembly, homodimer. The cofactor is Mg(2+).

It catalyses the reaction XTP + H2O = XMP + diphosphate + H(+). It carries out the reaction dITP + H2O = dIMP + diphosphate + H(+). The catalysed reaction is ITP + H2O = IMP + diphosphate + H(+). In terms of biological role, pyrophosphatase that catalyzes the hydrolysis of nucleoside triphosphates to their monophosphate derivatives, with a high preference for the non-canonical purine nucleotides XTP (xanthosine triphosphate), dITP (deoxyinosine triphosphate) and ITP. Seems to function as a house-cleaning enzyme that removes non-canonical purine nucleotides from the nucleotide pool, thus preventing their incorporation into DNA/RNA and avoiding chromosomal lesions. The chain is dITP/XTP pyrophosphatase from Synechococcus sp. (strain CC9311).